The following is a 497-amino-acid chain: Ganglioside-induced differentiation-associated-protein 2 (497 aa).

A Macro domain is found at 43 to 223 (RSPFLYNRDI…TYQKLLPLYF (181 aa)). Phosphoserine is present on S280. Positions 333–481 (DIASLKALYQ…FPPFVLEYDA (149 aa)) constitute a CRAL-TRIO domain.

Belongs to the GDAP2 family.

This Rattus norvegicus (Rat) protein is Ganglioside-induced differentiation-associated-protein 2 (Gdap2).